Consider the following 860-residue polypeptide: Nuclear cap-binding protein complex subunit 1 (860 aa).

Positions 36–271 (CKDMLPDIRT…SNVKNALAND (236 aa)) constitute an MIF4G domain.

This sequence belongs to the NCBP1 family. In terms of assembly, component of the nuclear cap-binding complex (CBC).

Its subcellular location is the nucleus. Its function is as follows. Component of the cap-binding complex (CBC) involved in the nuclear export of capped U snRNAs. The CBC complex is required for efficient pre-mRNA splicing through efficient commitment complex and spliceosome formation; and involved in rRNA processing at sites A0, A1 and A2. In Eremothecium gossypii (strain ATCC 10895 / CBS 109.51 / FGSC 9923 / NRRL Y-1056) (Yeast), this protein is Nuclear cap-binding protein complex subunit 1 (CBC1).